A 343-amino-acid chain; its full sequence is Vancomycin/teicoplanin A-type resistance protein VanA (343 aa).

ATP contacts are provided by residues Lys-133, 169–171, 177–178, 207–214, and Phe-241; these read FVK, SS, and EQAVSGCE. One can recognise an ATP-grasp domain in the interval 137–338; the sequence is YIVAKNAGIA…LPELIDRLIV (202 aa). Residue His-244 coordinates substrate. 304-305 is an ATP binding site; the sequence is NE. Residues Glu-305 and Asn-307 each contribute to the Mg(2+) site.

This sequence belongs to the D-alanine--D-alanine ligase family. It depends on Mg(2+) as a cofactor. Requires Mn(2+) as cofactor.

The protein resides in the cell membrane. The enzyme catalyses (R)-lactate + D-alanine + ATP = D-alanyl-(R)-lactate + ADP + phosphate. Functionally, required for high-level resistance to glycopeptide antibiotics. D-Ala--D-Ala ligase of altered specificity which catalyzes ester bond formation between D-Ala and various D-hydroxy acids; produces a peptidoglycan which does not terminate in D-alanine but in D-lactate, thus preventing vancomycin or teicoplanin binding. The polypeptide is Vancomycin/teicoplanin A-type resistance protein VanA (vanA) (Enterococcus faecium (Streptococcus faecium)).